The primary structure comprises 118 residues: Non-specific lipid-transfer protein-like 1 (118 aa).

In terms of domain architecture, SCP2 spans 5–113; sequence SDVIFEEIKE…KLRTILDPKM (109 aa).

This Caenorhabditis elegans protein is Non-specific lipid-transfer protein-like 1 (nlt-1).